The following is a 404-amino-acid chain: Probable protein phosphatase 2C 30 (404 aa).

Over residues 42 to 52 (AERGAEEETSG) the composition is skewed to basic and acidic residues. Residues 42-72 (AERGAEEETSGKRRRLDGGGGEASTDEEDRE) are disordered. Residues 77–399 (RYGFTSVCGR…DNVSVVVVNL (323 aa)) enclose the PPM-type phosphatase domain. Mn(2+)-binding residues include Asp-111, Gly-112, and Asp-298. Residues 321-369 (GRRERNRSSPTSNLSPRQSSSSGDEAPNDGAPSAAAGSESDEESAAEED) form a disordered region. Polar residues predominate over residues 330 to 343 (PTSNLSPRQSSSSG). Mn(2+) is bound at residue Asp-390.

This sequence belongs to the PP2C family. Interacts with PYL5 and SAPK2. Binding to PYL5 is dependent on the presence of abscisic acid (ABA). Interacts with PYL3, PYL5 and PYL9. Binding to PYL5 and PYL9 is dependent on the presence of ABA. Mg(2+) is required as a cofactor. It depends on Mn(2+) as a cofactor.

It is found in the nucleus. The catalysed reaction is O-phospho-L-seryl-[protein] + H2O = L-seryl-[protein] + phosphate. It carries out the reaction O-phospho-L-threonyl-[protein] + H2O = L-threonyl-[protein] + phosphate. Its function is as follows. Together with ABI5, PYL5 and SAPK2, is part of an abscisic acid (ABA) signaling unit that modulates seed germination and early seedling growth. The chain is Probable protein phosphatase 2C 30 from Oryza sativa subsp. japonica (Rice).